The primary structure comprises 134 residues: 15.4 kDa class V heat shock protein (134 aa).

The sHSP domain occupies 19–126 (SLNNYQENHV…LIDPSDVPES (108 aa)).

This sequence belongs to the small heat shock protein (HSP20) family. May form oligomeric structures.

The protein resides in the cytoplasm. This chain is 15.4 kDa class V heat shock protein (HSP15.4), found in Arabidopsis thaliana (Mouse-ear cress).